The chain runs to 187 residues: Serine/arginine-rich splicing factor RSZ21 (187 aa).

One can recognise an RRM domain in the interval 2-73; the sequence is TRVYVGNLDP…WRVELSHKDK (72 aa). Disordered stretches follow at residues 68–89 and 105–187; these read LSHKDKGGRGGGGGRRGGIEDS and RRGR…ANGV. The segment at 89 to 106 adopts a CCHC-type zinc-finger fold; that stretch reads SKCYECGELGHFARECRR. A compositionally biased stretch (basic residues) spans 107-122; sequence GRGSVRRRSPSPRRRR. Serine 123, serine 132, serine 134, serine 140, serine 146, and serine 159 each carry phosphoserine. Residues 136–155 are compositionally biased toward basic residues; sequence RGRRSPPRRRSVTPPRRGRS. Over residues 165–177 the composition is skewed to basic and acidic residues; sequence SRRDSPRRRDSPY. Over residues 178 to 187 the composition is skewed to low complexity; it reads GRRSPYANGV. Serine 181 is subject to Phosphoserine.

The protein belongs to the splicing factor SR family. RSZ subfamily. As to quaternary structure, component of the spliceosome. Interacts with SNRNP35, AFC2, CYP59, RS2Z33 and RNU1. Interacts with MOS14. Post-translationally, extensively phosphorylated on serine residues in the RS domain. Phosphorylated by AFC2. Expressed in roots, leaves, flowers and siliques.

It localises to the nucleus speckle. In terms of biological role, probably involved in intron recognition and spliceosome assembly. This chain is Serine/arginine-rich splicing factor RSZ21 (RSZ21), found in Arabidopsis thaliana (Mouse-ear cress).